The following is a 383-amino-acid chain: Acetylornithine deacetylase (383 aa).

Residue H80 coordinates Zn(2+). Residue D82 is part of the active site. D112 contacts Zn(2+). E144 is an active-site residue. Positions 145, 169, and 355 each coordinate Zn(2+).

The protein belongs to the peptidase M20A family. ArgE subfamily. In terms of assembly, homodimer. Zn(2+) serves as cofactor. Co(2+) is required as a cofactor. The cofactor is glutathione.

Its subcellular location is the cytoplasm. It catalyses the reaction N(2)-acetyl-L-ornithine + H2O = L-ornithine + acetate. The protein operates within amino-acid biosynthesis; L-arginine biosynthesis; L-ornithine from N(2)-acetyl-L-ornithine (linear): step 1/1. Functionally, catalyzes the hydrolysis of the amide bond of N(2)-acetylated L-amino acids. Cleaves the acetyl group from N-acetyl-L-ornithine to form L-ornithine, an intermediate in L-arginine biosynthesis pathway, and a branchpoint in the synthesis of polyamines. The chain is Acetylornithine deacetylase from Escherichia coli O127:H6 (strain E2348/69 / EPEC).